A 100-amino-acid chain; its full sequence is MIKSELVQIVAARNPHLYHRDVENIVNAVLDEITDALAAGNRVELRGFGAFSVKNRPSRSGRNPRTGESVFVEEKWVPFFKTGKELRERLNPGMGDEEDD.

It belongs to the bacterial histone-like protein family. As to quaternary structure, heterodimer of an alpha and a beta chain.

Functionally, this protein is one of the two subunits of integration host factor, a specific DNA-binding protein that functions in genetic recombination as well as in transcriptional and translational control. This chain is Integration host factor subunit beta, found in Agrobacterium fabrum (strain C58 / ATCC 33970) (Agrobacterium tumefaciens (strain C58)).